The primary structure comprises 349 residues: Bifunctional nitrilase/nitrile hydratase NIT4A (349 aa).

A CN hydrolase domain is found at valine 29 to leucine 301. The active-site Proton acceptor is the glutamate 69. Lysine 156 is a catalytic residue. Cysteine 190 (nucleophile) is an active-site residue.

Belongs to the carbon-nitrogen hydrolase superfamily. Nitrilase family. In terms of tissue distribution, ubiquitous.

The enzyme catalyses L-asparagine = 3-cyano-L-alanine + H2O. It carries out the reaction 3-cyano-L-alanine + 2 H2O = L-aspartate + NH4(+). In terms of biological role, involved in the cyanide detoxification pathway. Has nitrilase and nitrile-hydratase activity in the ratio 4.0:1, producing both asparagine and aspartic acid from beta-cyano-L-alanine (Ala(CN)). Can also use 3-phenylpropionitrile as substrate, but not indole-3-acetonitrile. This is Bifunctional nitrilase/nitrile hydratase NIT4A (NIT4A) from Lupinus angustifolius (Narrow-leaved blue lupine).